The primary structure comprises 568 residues: Protein phosphatase 1 regulatory inhibitor subunit 16B (568 aa).

Residues 15–55 (EKVPTLERLRAAQKRRAQQLKKWAQYEQDLQHRKRKHERKR) are a coiled coil. Ser-69 bears the Phosphoserine mark. ANK repeat units lie at residues 100-129 (DGLT…NVNA), 133-162 (ELWT…DLLA), 228-257 (QGAT…RVDV), and 261-290 (DGWE…SLSA). The tract at residues 327–346 (RHKSSLSRRTSSAGSRGKVV) is disordered. A phosphoserine mark is found at Ser-333, Ser-337, and Ser-350. Positions 333–342 (SRRTSSAGSR) are enriched in low complexity. Residues 373–404 (SASEDQRNSTYNGDIRETRTDQENKDPNPRLE) are disordered. The segment covering 386-404 (DIRETRTDQENKDPNPRLE) has biased composition (basic and acidic residues). Ser-477 is modified (phosphoserine). The interval 504-525 (GSGVSRTGEGSSEGKAPLIGGR) is disordered. An ANK 5 repeat occupies 531–560 (SNGTSVYYTVTSGDPPLLKFKAPIEEMEEK). Cys-564 carries S-palmitoyl cysteine lipidation. Cys-565 is subject to Cysteine methyl ester. Residue Cys-565 is the site of S-farnesyl cysteine attachment. Positions 566–568 (RIS) are cleaved as a propeptide — removed in mature form.

Interacts with PPP1CA, PPP1CB and MSN. Interacts (via its fourth ankyrin repeat) with the mature dimeric form of RPSA/LAMR1. Interacts with EEF1A1. Interacts with PTEN. Interacts with ECE1. In terms of processing, phosphorylated by PKA and, after PKA priming, by GSK3B. Phosphorylation by GSK3B reduces its association with PP1C and enhances PP1C activity. Dephosphorylation by its associated PP1C results in enhanced association with PP1C, but reduced PP1C activity.

It is found in the cell membrane. The protein localises to the nucleus. It localises to the cell projection. Regulator of protein phosphatase 1 (PP1) that acts as a positive regulator of pulmonary endothelial cell (EC) barrier function. Protects the endothelial barrier from lipopolysaccharide (LPS)-induced vascular leakage. Involved in the regulation of the PI3K/AKT signaling pathway. Involved in the regulation of angiogenesis and endothelial cell proliferation through the control of ECE1 dephosphorylation, trafficking and activity. Involved in the regulation of endothelial cell filopodia extension. May be a downstream target for TGF-beta1 signaling cascade in endothelial cells. Involved in PKA-mediated moesin dephosphorylation which is important in EC barrier protection against thrombin stimulation. Promotes the interaction of PPP1CA with RPSA/LAMR1 and in turn facilitates the dephosphorylation of RPSA/LAMR1. Involved in the dephosphorylation of EEF1A1. The polypeptide is Protein phosphatase 1 regulatory inhibitor subunit 16B (PPP1R16B) (Bos taurus (Bovine)).